The chain runs to 101 residues: Small ribosomal subunit protein uS10 (101 aa).

This sequence belongs to the universal ribosomal protein uS10 family. As to quaternary structure, part of the 30S ribosomal subunit.

Functionally, involved in the binding of tRNA to the ribosomes. This is Small ribosomal subunit protein uS10 from Porphyromonas gingivalis (strain ATCC 33277 / DSM 20709 / CIP 103683 / JCM 12257 / NCTC 11834 / 2561).